A 116-amino-acid polypeptide reads, in one-letter code: Large ribosomal subunit protein uL18 (116 aa).

It belongs to the universal ribosomal protein uL18 family. As to quaternary structure, part of the 50S ribosomal subunit; part of the 5S rRNA/L5/L18/L25 subcomplex. Contacts the 5S and 23S rRNAs.

Functionally, this is one of the proteins that bind and probably mediate the attachment of the 5S RNA into the large ribosomal subunit, where it forms part of the central protuberance. In Pseudomonas syringae pv. tomato (strain ATCC BAA-871 / DC3000), this protein is Large ribosomal subunit protein uL18.